The following is a 337-amino-acid chain: MKKFIFFFKNYCYISGSMLLFSLIDLLLWIISLYCVGLVFWILFALQCVYFVWWLWKNIFYQLNAFRLVNFVWDNPLSVIIGKLGTGKTLLLTYLSQTMKLLTDEIYSNYPLEDDKVKVLTFKNLDFTDRTKPVPPDDSVILFDESYLYIDGTSPHDEKKVHSGKIPWIVLARHFRHRALFTAQREGMIWNNIRQLASGIIIPISLKKPVAKKGFNFFNRFFIMRMGIFQDITDYEIWKTKSVERTAEGKRAKHKSDVGLGIRFFKIIIPLEFANKYDSEWLKFVRDLKNDEIVNEKFYYWSEITKLSVKERLELFDIDILKKNLKPRKEKGNGKDD.

2 helical membrane passes run 4–24 (FIFF…FSLI) and 26–46 (LLLW…LFAL).

It belongs to the plectrovirus ORF2 family.

The protein resides in the host membrane. This is an uncharacterized protein from Spiroplasma melliferum (SpV1).